The primary structure comprises 331 residues: Decarboxylase orsB (331 aa).

His11, His157, and Asp284 together coordinate Zn(2+).

This sequence belongs to the metallo-dependent hydrolases superfamily. ACMSD family.

The protein operates within secondary metabolite biosynthesis. In terms of biological role, decarboxylase; part of the gene cluster that mediates the biosynthesis of orsellinic acid, as well as of the cathepsin K inhibitors F9775 A and F9775 B. The non-reducing polyketide synthase orsA produces orsellinic acid by condensing acetyl-CoA with 3 malonyl-CoA units. Further modifications by the decarboxylase orsB and the tyrosinase-like protein orsC lead to the production of F9775 A and F9775 B. The functions of orsD and orsE remain unclear since only orsB and orsC are required to convert orsellinic acid into F9775 A and F9775 B. This is Decarboxylase orsB from Emericella nidulans (strain FGSC A4 / ATCC 38163 / CBS 112.46 / NRRL 194 / M139) (Aspergillus nidulans).